The following is a 41-amino-acid chain: Photosystem I reaction center subunit IX (41 aa).

The helical transmembrane segment at 7–27 threads the bilayer; it reads YLSTAPVLATLWFGFLAGLLI.

It belongs to the PsaJ family.

Its subcellular location is the plastid. It is found in the chloroplast thylakoid membrane. May help in the organization of the PsaE and PsaF subunits. The protein is Photosystem I reaction center subunit IX of Physcomitrium patens (Spreading-leaved earth moss).